A 122-amino-acid chain; its full sequence is Prefoldin subunit 1 (122 aa).

It belongs to the prefoldin subunit beta family. Heterohexamer of two PFD-alpha type and four PFD-beta type subunits.

Binds specifically to cytosolic chaperonin (c-CPN) and transfers target proteins to it. Binds to nascent polypeptide chain and promotes folding in an environment in which there are many competing pathways for nonnative proteins. In Tetraodon nigroviridis (Spotted green pufferfish), this protein is Prefoldin subunit 1 (pfdn1).